The primary structure comprises 31 residues: Cyclotide cter-R (31 aa).

The segment at residues 1–31 is a cross-link (cyclopeptide (Gly-Asn)); sequence GIPCGESCVFIPCTVTALLGCSCKDKVCYKN. Disulfide bonds link C4-C21, C8-C23, and C13-C28.

This is a cyclic peptide.

Its subcellular location is the secreted. Its function is as follows. Probably participates in a plant defense mechanism. In Clitoria ternatea (Butterfly pea), this protein is Cyclotide cter-R.